The primary structure comprises 226 residues: METVVIVAIGVLATIFLASFAALVVVCRQRYCRTKNLLTNYNNKPTVDLIGAMETQSEPSDLELDDVVITNPHIEAILEDEDWIEDASGLVSHCIAILKICHTLTEKLVAMTMGSGAKMKSPSSLSDIIIVAKRISPRVDDVVRSMYPPLDPKLLDARTTALLLSVSHLVLVTKNACHLTGGMDWIDQSLSAAEDHLAVLREAALATEPERPMTGADNFLQEQSAI.

The Cytoplasmic segment spans residues 1-3; it reads MET. The helical transmembrane segment at 4-24 threads the bilayer; it reads VVIVAIGVLATIFLASFAALV. Over 25–226 the chain is Extracellular; it reads VVCRQRYCRT…DNFLQEQSAI (202 aa).

It belongs to the TMEM98 family.

It localises to the endoplasmic reticulum membrane. The protein resides in the cell membrane. Its subcellular location is the secreted. It is found in the extracellular exosome. The protein is Transmembrane protein 98 (tmem98) of Xenopus laevis (African clawed frog).